A 1738-amino-acid polypeptide reads, in one-letter code: Sodium leak channel NALCN (1738 aa).

Residues methionine 1–proline 36 lie on the Cytoplasmic side of the membrane. Residues tryptophan 37 to threonine 57 traverse the membrane as a helical segment. At proline 58–proline 65 the chain is on the extracellular side. Residues proline 66–methionine 90 form a helical membrane-spanning segment. Residues histidine 91–arginine 106 lie on the Cytoplasmic side of the membrane. Residues tryptophan 107–isoleucine 129 form a helical membrane-spanning segment. The Extracellular portion of the chain corresponds to alanine 130–serine 137. A helical; Voltage-sensor transmembrane segment spans residues proline 138–phenylalanine 158. Residues arginine 159–arginine 173 lie on the Cytoplasmic side of the membrane. A helical transmembrane segment spans residues serine 174 to methionine 199. The Extracellular segment spans residues phenylalanine 200–serine 269. 2 cysteine pairs are disulfide-bonded: cysteine 207–cysteine 239 and cysteine 229–cysteine 245. 2 N-linked (GlcNAc...) asparagine glycosylation sites follow: asparagine 210 and asparagine 216. The segment at residues isoleucine 270–alanine 289 is an intramembrane region (pore-forming). Topologically, residues isoleucine 290–proline 294 are extracellular. Residues arginine 295–isoleucine 322 form a helical membrane-spanning segment. Topologically, residues glutamate 323–arginine 382 are cytoplasmic. Residues serine 383–serine 403 traverse the membrane as a helical segment. Residues asparagine 404 to aspartate 416 are Extracellular-facing. Residues glutamate 417–cysteine 439 traverse the membrane as a helical segment. At leucine 440–serine 447 the chain is on the cytoplasmic side. The chain crosses the membrane as a helical span at residues serine 448–aspartate 468. Residues leucine 469–serine 472 lie on the Extracellular side of the membrane. A helical; Voltage-sensor membrane pass occupies residues glutamine 473–leucine 492. The Cytoplasmic segment spans residues glutamate 493–proline 502. Residues glycine 503 to phenylalanine 530 form a helical membrane-spanning segment. At valine 531 to alanine 543 the chain is on the extracellular side. Positions phenylalanine 544–threonine 563 form an intramembrane region, pore-forming. At leucine 564–histidine 569 the chain is on the extracellular side. A helical transmembrane segment spans residues methionine 570 to leucine 599. Residues aspartate 600 to threonine 886 are Cytoplasmic-facing. Residues glutamine 762 to leucine 785 form a disordered region. Residues tyrosine 795–histidine 830 adopt a coiled-coil conformation. A helical membrane pass occupies residues tyrosine 887–glutamate 906. Residues serine 907 to alanine 915 lie on the Extracellular side of the membrane. The helical transmembrane segment at proline 916–alanine 939 threads the bilayer. Over aspartate 940–threonine 947 the chain is Cytoplasmic. A helical transmembrane segment spans residues alanine 948–methionine 972. Residues proline 973 to serine 980 lie on the Extracellular side of the membrane. The helical; Voltage-sensor transmembrane segment at glycine 981 to methionine 1003 threads the bilayer. The Cytoplasmic portion of the chain corresponds to arginine 1004 to lysine 1015. The chain crosses the membrane as a helical span at residues glutamate 1016 to phenylalanine 1039. The Extracellular portion of the chain corresponds to alanine 1040–alanine 1104. A disulfide bond links cysteine 1046 and cysteine 1057. Asparagine 1064 carries N-linked (GlcNAc...) asparagine glycosylation. An intramembrane region (pore-forming) is located at residues methionine 1105 to isoleucine 1124. Residues isoleucine 1125–glycine 1129 are Extracellular-facing. The helical transmembrane segment at proline 1130–phenylalanine 1159 threads the bilayer. At asparagine 1160–proline 1210 the chain is on the cytoplasmic side. Residues phenylalanine 1211–leucine 1227 traverse the membrane as a helical segment. Residues serine 1228–proline 1236 are Extracellular-facing. The helical transmembrane segment at valine 1237–isoleucine 1260 threads the bilayer. Topologically, residues isoleucine 1261–serine 1271 are cytoplasmic. A helical membrane pass occupies residues arginine 1272–alanine 1293. Topologically, residues leucine 1294–asparagine 1296 are extracellular. A helical; Voltage-sensor transmembrane segment spans residues alanine 1297–histidine 1318. The Cytoplasmic segment spans residues valine 1319–serine 1331. A helical membrane pass occupies residues methionine 1332–phenylalanine 1357. At glycine 1358–alanine 1378 the chain is on the extracellular side. Residues isoleucine 1379–cysteine 1398 constitute an intramembrane region (pore-forming). Topologically, residues methionine 1399 to tyrosine 1420 are extracellular. Cysteine 1405 and cysteine 1417 are joined by a disulfide. The chain crosses the membrane as a helical span at residues alanine 1421–valine 1447. Over glutamate 1448–isoleucine 1738 the chain is Cytoplasmic. Residues proline 1611 to proline 1678 form a disordered region. Over residues serine 1613 to methionine 1632 the composition is skewed to polar residues. The span at glutamine 1633–serine 1648 shows a compositional bias: low complexity.

It belongs to the NALCN family. In terms of assembly, found in a complex with NALCN, UNC79, UNC80 and NACL1; these auxiliary subunits are indispensable for the function of NALCN channel. Interacts with UNC80; required for the NALCN activation/inhibition by GPCRs in neurons. Found in a complex with NALCN, UNC79 and UNC80; UNC80 bridges NALCN to UNC79. Interacts with CHRM3. In terms of processing, phosphorylated on tyrosine residues.

The protein resides in the cell membrane. The catalysed reaction is Na(+)(in) = Na(+)(out). Its activity is regulated as follows. Inhibited by low micromolar concentrations of Gd(3+) and high micromolar concentrations of verapamil. Insensitive to tetrodotoxin (TTX) and potentiated by low external Ca(2+) concentration. Its function is as follows. Voltage-gated ion channel responsible for the resting Na(+) permeability that controls neuronal excitability. NALCN channel functions as a multi-protein complex, which consists at least of NALCN, NALF1, UNC79 and UNC80. NALCN is the voltage-sensing, pore-forming subunit of the NALCN channel complex. NALCN channel complex is constitutively active and conducts monovalent cations but is blocked by physiological concentrations of extracellular divalent cations. In addition to its role in regulating neuronal excitability, is required for normal respiratory rhythm, systemic osmoregulation by controlling the serum sodium concentration and in the regulation of the intestinal pace-making activity in the interstitial cells of Cajal. NALCN channel is also activated by neuropeptides such as neurotensin and substance P (SP) through a SRC family kinases-dependent pathway. In addition, NALCN activity is enhanced/modulated by several GPCRs, such as CHRM3. In Homo sapiens (Human), this protein is Sodium leak channel NALCN.